A 626-amino-acid polypeptide reads, in one-letter code: MGKIIGIDLGTTNSCVSVMEGQEAVVIPNAEGKRTTPSIIAFVEGGEIKVGDPAKRQAVTNPTKTVASIKRFMGHSFSETTDEAKRVPYSVVKGDNNTPRVDIDGRLYTAQELSAMTLQKMKKTAEDYLGQTVTEAVITVPAYFNDAQRQATKEAGEIAGLKVMRIINEPTAAALAYGLDKKGIDQKIAVYDLGGGTFDISILELGDGVFEVLSTNGDTHLGGDDFDQTIIDWLADEFKAEEGIDLRLDPMSLQRIKEAAEKAKIELSSSAETEINLPYVTATASGPKHLVKKLTRAKFEQLSDTLVKRSMEPVAKALKDAGLTVKDIDEVILVGGSTRMPRIADEVEKFFGKKASKGVNPDEVVAIGAAIQGGVLSGDVKDVLLLDVTPLSLGIETMGGVMTILIESNTTIPTKKSQIFSTAADSQPTVELHVLQGARAMAVDNKTIGRFNLDGIPPAPRGVPQIEVAFDIDANGIIKVSATDKGTGKSHDIRIEASSGLTSEEIERMKKDAEANAGADKIARERVEKINEADSLIFQTETQLKELGDKITDEHKTAIEYALTELRMAHQSQDLEAIQKGLDNVNAAWKTATEAMYAQGEQGQAAQPQAETQGDDVQDVEFEEVK.

Residue Thr197 is modified to Phosphothreonine; by autocatalysis. Residues 598–612 (AQGEQGQAAQPQAET) show a composition bias toward low complexity. Residues 598-626 (AQGEQGQAAQPQAETQGDDVQDVEFEEVK) form a disordered region. The segment covering 613–626 (QGDDVQDVEFEEVK) has biased composition (acidic residues).

It belongs to the heat shock protein 70 family.

In terms of biological role, acts as a chaperone. The polypeptide is Chaperone protein DnaK (Flavobacterium psychrophilum (strain ATCC 49511 / DSM 21280 / CIP 103535 / JIP02/86)).